Here is a 117-residue protein sequence, read N- to C-terminus: Con-Ins T3 (117 aa).

Residues 1–24 form the signal peptide; sequence MTTSFYFLLMALGLLLYVCQSSFG. Residues 25–29 constitute a propeptide that is removed on maturation; that stretch reads NQHTR. A 4-hydroxyproline; partial modification is found at Pro-34. 3 disulfide bridges follow: Cys-38–Cys-101, Cys-50–Cys-114, and Cys-100–Cys-105. Positions 53–94 are cleaved as a propeptide — c peptide; it reads KRNDAGKKRGQASPLWQRGGSLSMLKARAKRNEAFHLQRAHR. Glu-98 is subject to 4-carboxyglutamate. Glu-109 carries the 4-carboxyglutamate; partial modification. Cys-114 bears the Cysteine amide mark. The propeptide occupies 116–117; the sequence is NS.

This sequence belongs to the insulin family. In terms of assembly, heterodimer of A and B chains; disulfide-linked. In terms of tissue distribution, expressed by the venom gland.

It localises to the secreted. Functionally, this venom insulin facilitates prey capture by rapidly inducing hypoglycemic shock. It is one of the smallest known insulin found in nature and lacks the C-terminal segment of the B chain that, in human insulin, mediates engagement of the insulin receptor (INSR) and assembly of the hormone's hexameric storage form. Despite lacking this segment, it both binds and activates human insulin receptor (long isoform (HIR-B) OF INSR) with only a 10-fold lower potency. In vivo, intraperitoneal injection of this peptide into zebrafish lowers blood glucose with the same potency than human insulin. In addition, when applied to water, this peptide reduces overall locomotor activity of zebrafish larvae, observed as a significant decrease in the percentage of time spent swimming and movement frequency. The polypeptide is Con-Ins T3 (Conus tulipa (Fish-hunting cone snail)).